Reading from the N-terminus, the 491-residue chain is MVPVIALVGRPNVGKSTLFNRLTKTRDAIVAEYAGLTRDRQYGEAKWQGRTYIVIDTGGISGDEEGIDAKMAEQSLQAIEEADAVLFMVDSRAGMTAADQLIAEHLRKRNKRSFLVANKVDTVDPDIARAEFSPLGLGDALPIAAAHGRGINAMLEAALGIFPRDDEGEEGEGEAEVVAEGEEPKRVPGPSEKDGIKIAIIGRPNVGKSTLVNRMLGEERVIVYDQAGTTRDSIYIPFERDEDKYTLIDTAGVRRRGKIFEAVEKFSVVKTLQAIQDANVVIFVMDAREGVVEHDLNLLGFVLETGRALVIALNKWDGMEPGQRDYVKIELERRLMFADFADIHFISALHGTGVGHLYKSVQAAFQSAVTRWPTSRLTRILEDAVQEHQPPLVNGRRIKLRYAHLGGANPPLIVIHGNQVEAVPKAYTRYLENTYRRVLKLVGTPIRIEYKGGDNPYEGKKNSLTERQVNKKRRLMSHHKKAEKKRRDKKR.

Residues P3–D166 form the EngA-type G 1 domain. Residues G9–S16, D56–I60, and N118–D121 each bind GTP. The interval R164 to S191 is disordered. The segment covering D166–G181 has biased composition (acidic residues). Residues E182 to S191 are compositionally biased toward basic and acidic residues. The EngA-type G 2 domain maps to I196–V369. GTP contacts are provided by residues G202–S209, D249–V253, and N314–D317. The KH-like domain occupies T370–D454. A compositionally biased stretch (basic and acidic residues) spans G452–L464. The disordered stretch occupies residues G452–R491. The span at N470 to R491 shows a compositional bias: basic residues.

It belongs to the TRAFAC class TrmE-Era-EngA-EngB-Septin-like GTPase superfamily. EngA (Der) GTPase family. As to quaternary structure, associates with the 50S ribosomal subunit.

Functionally, GTPase that plays an essential role in the late steps of ribosome biogenesis. The protein is GTPase Der of Azotobacter vinelandii (strain DJ / ATCC BAA-1303).